We begin with the raw amino-acid sequence, 637 residues long: Chaperone protein HtpG (637 aa).

The a; substrate-binding stretch occupies residues 1–345; the sequence is MSQQETHGFQ…SNDLPLNVSR (345 aa). The b stretch occupies residues 346–562; sequence EILQDNHITK…EGEMSSQMIK (217 aa). A c region spans residues 563 to 637; the sequence is LMQAAGQPVP…MNQMLLANLK (75 aa).

It belongs to the heat shock protein 90 family. As to quaternary structure, homodimer.

The protein resides in the cytoplasm. In terms of biological role, molecular chaperone. Has ATPase activity. The sequence is that of Chaperone protein HtpG from Shewanella sp. (strain ANA-3).